The sequence spans 180 residues: Cancer/testis antigen 1 (180 aa).

2 stretches are compositionally biased toward gly residues: residues 1–47 and 55–66; these read MQAE…GPRG and GPGGGAPRGPHG. Residues 1–66 form a disordered region; that stretch reads MQAEGRGTGG…GGGAPRGPHG (66 aa).

Belongs to the CTAG/PCC1 family. Expressed in testis and ovary and in a wide variety of cancers. Detected in uterine myometrium. Expressed from 18 weeks until birth in human fetal testis. In the adult testis, is strongly expressed in spermatogonia and in primary spermatocytes, but not in post-meiotic cells or in testicular somatic cells (at protein level).

The protein localises to the cytoplasm. The protein is Cancer/testis antigen 1 (CTAG1A) of Homo sapiens (Human).